We begin with the raw amino-acid sequence, 467 residues long: Glutamate--tRNA ligase (467 aa).

The 'HIGH' region motif lies at 13 to 23 (PSPTGYLHVGG). Residues 245-249 (KLSKR) carry the 'KMSKS' region motif. K248 serves as a coordination point for ATP.

The protein belongs to the class-I aminoacyl-tRNA synthetase family. Glutamate--tRNA ligase type 1 subfamily. In terms of assembly, monomer.

It localises to the cytoplasm. It catalyses the reaction tRNA(Glu) + L-glutamate + ATP = L-glutamyl-tRNA(Glu) + AMP + diphosphate. Catalyzes the attachment of glutamate to tRNA(Glu) in a two-step reaction: glutamate is first activated by ATP to form Glu-AMP and then transferred to the acceptor end of tRNA(Glu). The protein is Glutamate--tRNA ligase of Herminiimonas arsenicoxydans.